A 254-amino-acid polypeptide reads, in one-letter code: Phosphoglycerate mutase 1 (254 aa).

Substrate contacts are provided by residues 10 to 17 (RHGESAWN) and 23 to 24 (SG). His-11 serves as the catalytic Tele-phosphohistidine intermediate. A phosphoserine mark is found at Ser-14 and Ser-23. Tyr-26 is modified (phosphotyrosine). Ser-31 carries the phosphoserine modification. Substrate-binding positions include Arg-62, 89-92 (ERHY), and Lys-100. Glu-89 acts as the Proton donor/acceptor in catalysis. At Lys-106 the chain carries N6-acetyllysine. 116 to 117 (RR) lines the substrate pocket. Phosphoserine is present on Ser-118. A substrate-binding site is contributed by 187–188 (GN). Position 251 is an N6-acetyllysine; alternate (Lys-251). An N6-succinyllysine; alternate modification is found at Lys-251. Residues Lys-253 and Lys-254 each carry the N6-acetyllysine modification.

This sequence belongs to the phosphoglycerate mutase family. BPG-dependent PGAM subfamily. As to quaternary structure, homodimer. In terms of processing, acetylated at Lys-253, Lys-253 and Lys-254 under high glucose condition. Acetylation increases catalytic activity. Under glucose restriction SIRT1 levels dramatically increase and it deacetylates the enzyme. As to expression, expressed in the liver and brain. Not found in the muscle.

The catalysed reaction is (2R)-2-phosphoglycerate = (2R)-3-phosphoglycerate. It catalyses the reaction (2R)-3-phospho-glyceroyl phosphate = (2R)-2,3-bisphosphoglycerate + H(+). Its function is as follows. Catalyzes the interconversion of 2-phosphoglycerate and 3-phosphoglyceratea crucial step in glycolysis, by using 2,3-bisphosphoglycerate. Also catalyzes the interconversion of (2R)-2,3-bisphosphoglycerate and (2R)-3-phospho-glyceroyl phosphate. The chain is Phosphoglycerate mutase 1 from Homo sapiens (Human).